Here is a 333-residue protein sequence, read N- to C-terminus: Flotillin-like protein FloA (333 aa).

The chain crosses the membrane as a helical span at residues 9–29; sequence IVLIVGGIIFLILFFHYVPFF.

It belongs to the flotillin-like FloA family. As to quaternary structure, homooligomerizes.

It localises to the cell membrane. It is found in the membrane raft. Found in functional membrane microdomains (FMM) that may be equivalent to eukaryotic membrane rafts. FMMs are highly dynamic and increase in number as cells age. Flotillins are thought to be important factors in membrane fluidity. This Bacteroides thetaiotaomicron (strain ATCC 29148 / DSM 2079 / JCM 5827 / CCUG 10774 / NCTC 10582 / VPI-5482 / E50) protein is Flotillin-like protein FloA.